The primary structure comprises 433 residues: Phosphomethylpyrimidine synthase (433 aa).

Substrate-binding positions include Asn-66, Met-94, Tyr-123, His-162, 184 to 186, 225 to 228, and Glu-264; these read SRG and DALR. His-268 provides a ligand contact to Zn(2+). Residue Tyr-291 coordinates substrate. His-332 serves as a coordination point for Zn(2+). Residues Cys-408, Cys-411, and Cys-415 each coordinate [4Fe-4S] cluster.

It belongs to the ThiC family. The cofactor is [4Fe-4S] cluster.

The catalysed reaction is 5-amino-1-(5-phospho-beta-D-ribosyl)imidazole + S-adenosyl-L-methionine = 4-amino-2-methyl-5-(phosphooxymethyl)pyrimidine + CO + 5'-deoxyadenosine + formate + L-methionine + 3 H(+). It participates in cofactor biosynthesis; thiamine diphosphate biosynthesis. Its function is as follows. Catalyzes the synthesis of the hydroxymethylpyrimidine phosphate (HMP-P) moiety of thiamine from aminoimidazole ribotide (AIR) in a radical S-adenosyl-L-methionine (SAM)-dependent reaction. This chain is Phosphomethylpyrimidine synthase, found in Saccharolobus islandicus (strain M.16.27) (Sulfolobus islandicus).